Consider the following 553-residue polypeptide: Transmembrane protein DDB_G0292058 (553 aa).

A signal peptide spans 1–26; that stretch reads MIKINKILSLLIILLIINCNYQFVKA. 2 consecutive transmembrane segments (helical) span residues 80–100 and 137–157; these read ILLS…GIIF and VFIL…VFIT. Asn-162, Asn-171, Asn-178, and Asn-195 each carry an N-linked (GlcNAc...) asparagine glycan. Helical transmembrane passes span 243-263 and 274-294; these read IIIV…VSAL and SIAL…HYPI. Asn-315, Asn-332, Asn-351, Asn-396, Asn-405, and Asn-462 each carry an N-linked (GlcNAc...) asparagine glycan. The chain crosses the membrane as a helical span at residues 515–535; that stretch reads LLIAPTAVFAILLTGLGITGI.

It is found in the membrane. This chain is Transmembrane protein DDB_G0292058, found in Dictyostelium discoideum (Social amoeba).